Consider the following 318-residue polypeptide: NADH-ubiquinone oxidoreductase chain 1 (318 aa).

8 consecutive transmembrane segments (helical) span residues phenylalanine 2 to leucine 22, methionine 70 to proline 90, leucine 100 to glycine 120, valine 136 to leucine 156, histidine 171 to alanine 191, isoleucine 231 to phenylalanine 251, glutamate 253 to valine 273, and leucine 294 to isoleucine 314.

Belongs to the complex I subunit 1 family.

The protein localises to the mitochondrion inner membrane. It carries out the reaction a ubiquinone + NADH + 5 H(+)(in) = a ubiquinol + NAD(+) + 4 H(+)(out). Functionally, core subunit of the mitochondrial membrane respiratory chain NADH dehydrogenase (Complex I) that is believed to belong to the minimal assembly required for catalysis. Complex I functions in the transfer of electrons from NADH to the respiratory chain. The immediate electron acceptor for the enzyme is believed to be ubiquinone. This chain is NADH-ubiquinone oxidoreductase chain 1 (MT-ND1), found in Priodontes maximus (Giant armadillo).